The sequence spans 60 residues: Large ribosomal subunit protein bL32 (60 aa).

The span at 1–16 (MAVPRRKTSPSRRGMR) shows a compositional bias: basic residues. The segment at 1–60 (MAVPRRKTSPSRRGMRRSADAIKRPTYVEDKDSGELRRPHHLDLKTGMYKGRQVLKKKDS) is disordered. Residues 17-44 (RSADAIKRPTYVEDKDSGELRRPHHLDL) show a composition bias toward basic and acidic residues.

This Rhodopseudomonas palustris (strain ATCC BAA-98 / CGA009) protein is Large ribosomal subunit protein bL32.